Here is a 751-residue protein sequence, read N- to C-terminus: MSTPHHQFESKSSTAIRRRLSSSVSSKQRPNIMTTTFASLTPMWAGVAGTLVNNNTQYEIAVTVHDGVYSTDFASVIIPVTPGDTVKNSKDIEAQVLNLIRKFSAEHLCKFLGAGITLALLKECPNLCTRLWLDMDIVPIVFNIKPFHTDSVTRPNIKHRISSTTGSYVPSGSETPTVYVEASHLGDPSHLSPNAAQKLPIPRTLDEQSDSAARKCLMYFGPNNNPRLSIGARNPVTVDAGGKIHLIDDLEEYRMTVGAGTWNAVIKLADELREKKVKIGFFSSTPQGGGVALMRHALIRFLTALDVDVAWYVPNPSPQVFRTTKNNHNILQGVAAPDLRLTQEAKDAFDAWILKNGLRWTAEGGPLAPGGVDVVFIDDPQMPGLIPLIKKVRPEVPIVYRSHIEIRNDLVHVAWSPQEEVWKYLWNNIQLADLFISHPVSKFVPSDVPTEKLALLGAATDWLDGLNKDLDPWDSPFYMGEFRPRGSHLNRGEFRSLCAKEKMHELNWPARDYIVQVARFDPSKGIPNVVDSYYKFRNLLRTRSPDMDESEHPQLLICGHGAVDDPDASIIYDQIMALVNSDPYKEYAHDIVVMRLPPSDELLNAMMANSRIALQLSTREGFEVKVSEALHTGKPVIACRTGGIPLQIQHGKSGYLTTPGEKDAVAGHFYDFYTDEALYRKMSDFARTHVSNEVGTVGNAAAWLYLAVMYSRGEKIKPNGAWINDFFREETGEPYKEGETKLPRTKLDMQG.

Residues 1 to 26 (MSTPHHQFESKSSTAIRRRLSSSVSS) constitute a propeptide that is removed on maturation. The disordered stretch occupies residues 1–28 (MSTPHHQFESKSSTAIRRRLSSSVSSKQ).

It belongs to the glycosyltransferase group 1 family. Glycosyltransferase 4 subfamily. In terms of assembly, homodimer. As to expression, expressed in mycelia, stipes and pilei.

The enzyme catalyses alpha,alpha-trehalose + phosphate = alpha-D-glucose + alpha-D-glucose 1-phosphate. In terms of biological role, reversibly catalyzes the synthesis and degradation of trehalose from glucose and alpha-D-glucose 1-phosphate. The equilibrium lies in the direction of trehalose synthesis. This chain is Trehalose phosphorylase, found in Pleurotus sajor-caju (Oyster mushroom).